Here is a 420-residue protein sequence, read N- to C-terminus: L-rhamnose isomerase (420 aa).

Mn(2+)-binding residues include histidine 262, aspartate 294, and aspartate 296.

This sequence belongs to the rhamnose isomerase family. As to quaternary structure, homotetramer. It depends on Mn(2+) as a cofactor.

The protein resides in the cytoplasm. It catalyses the reaction L-rhamnopyranose = L-rhamnulose. The protein operates within carbohydrate degradation; L-rhamnose degradation; glycerone phosphate from L-rhamnose: step 1/3. Functionally, catalyzes the interconversion of L-rhamnose and L-rhamnulose. The chain is L-rhamnose isomerase from Pectobacterium carotovorum subsp. carotovorum (strain PC1).